A 162-amino-acid polypeptide reads, in one-letter code: UPF0254 protein MTH1148 homolog (162 aa).

The protein belongs to the UPF0254 family.

This Methanothermobacter thermautotrophicus (strain Winter) (Methanobacterium thermoautotrophicum) protein is UPF0254 protein MTH1148 homolog.